The primary structure comprises 693 residues: Glycine--tRNA ligase beta subunit (693 aa).

This sequence belongs to the class-II aminoacyl-tRNA synthetase family. In terms of assembly, tetramer of two alpha and two beta subunits.

It localises to the cytoplasm. The enzyme catalyses tRNA(Gly) + glycine + ATP = glycyl-tRNA(Gly) + AMP + diphosphate. This is Glycine--tRNA ligase beta subunit from Ligilactobacillus salivarius (strain UCC118) (Lactobacillus salivarius).